The chain runs to 961 residues: Outer capsid protein VP2 (961 aa).

Belongs to the orbivirus VP2 family.

The protein resides in the virion. The VP2 protein is one of the two proteins (with VP5) target of the host immunogenic response. Responsible for viral which constitute the virus particle outer capsid. It is the major attachment to target host cell, probably by binding to sialic acid. This attachment induces virion internalization predominantly through clathrin-dependent endocytosis. This Bluetongue virus 1 (isolate South Africa) (BTV 1) protein is Outer capsid protein VP2 (Segment-2).